The primary structure comprises 365 residues: tRNA(Met) cytidine acetate ligase (365 aa).

ATP-binding positions include 7–20 (IAEF…HKYL), G96, N152, and R175.

The protein belongs to the TmcAL family.

The protein localises to the cytoplasm. The catalysed reaction is cytidine(34) in elongator tRNA(Met) + acetate + ATP = N(4)-acetylcytidine(34) in elongator tRNA(Met) + AMP + diphosphate. Its function is as follows. Catalyzes the formation of N(4)-acetylcytidine (ac(4)C) at the wobble position of elongator tRNA(Met), using acetate and ATP as substrates. First activates an acetate ion to form acetyladenylate (Ac-AMP) and then transfers the acetyl group to tRNA to form ac(4)C34. The chain is tRNA(Met) cytidine acetate ligase from Streptococcus pneumoniae (strain ATCC BAA-255 / R6).